Reading from the N-terminus, the 160-residue chain is Ribosomal RNA large subunit methyltransferase H (160 aa).

S-adenosyl-L-methionine contacts are provided by residues L77, G109, and 128 to 133 (FSRLTF).

Belongs to the RNA methyltransferase RlmH family. Homodimer.

The protein localises to the cytoplasm. It catalyses the reaction pseudouridine(1915) in 23S rRNA + S-adenosyl-L-methionine = N(3)-methylpseudouridine(1915) in 23S rRNA + S-adenosyl-L-homocysteine + H(+). Specifically methylates the pseudouridine at position 1915 (m3Psi1915) in 23S rRNA. The sequence is that of Ribosomal RNA large subunit methyltransferase H from Desulfitobacterium hafniense (strain DSM 10664 / DCB-2).